The primary structure comprises 66 residues: Cold shock protein CspB (66 aa).

Residues 4–63 enclose the CSD domain; sequence GKVKWFNNEKGYGFIEVEGGSDVFVHFTAIQGEGFKTLEEGQEVSFEIVQGNRGPQAANV.

As to quaternary structure, homodimer.

It is found in the cytoplasm. Functionally, affects cell viability at low temperatures. The sequence is that of Cold shock protein CspB (cspB) from Bacillus caldolyticus.